Consider the following 37-residue polypeptide: Potassium channel toxin alpha-KTx 3.9 (37 aa).

3 disulfides stabilise this stretch: C7-C27, C13-C32, and C17-C34. An interaction with Ca(2+)-activated K(+) channels region spans residues 25-32 (GKCMNRKC).

This sequence belongs to the short scorpion toxin superfamily. Potassium channel inhibitor family. Alpha-KTx 03 subfamily. Expressed by the venom gland.

It localises to the secreted. Binds and inhibits potassium channels. Intracerebroventricular injection into mice induces paralyzing symptoms followed by death. Its binding affinity to rat brain synaptosomes is 5-fold lower than this of KTX 1. The protein is Potassium channel toxin alpha-KTx 3.9 (KTX3) of Buthus occitanus tunetanus (Common European scorpion).